A 143-amino-acid chain; its full sequence is Trypsin inhibitor CMc (143 aa).

The N-terminal stretch at 1–24 is a signal peptide; that stretch reads MASCSQHLLSAVAIFSVLAGVATA.

The protein belongs to the protease inhibitor I6 (cereal trypsin/alpha-amylase inhibitor) family. As to expression, endosperm.

Its subcellular location is the secreted. Its function is as follows. Trypsin inhibitor. No alpha-amylase inhibition detected. The sequence is that of Trypsin inhibitor CMc (ITR2) from Hordeum vulgare (Barley).